Here is a 360-residue protein sequence, read N- to C-terminus: MLVWLAEYLVKYHSGFNVFSYLTFRAIVSLLTALAIALWMGPRMIAFLQKLQIGQVVRNDGPESHFSKRGTPTMGGLLILLSITISTLLWVRLNNPYVWCVLIVLIGYGIVGFVDDYRKVVRKDTKGLIARWKYFWQSVLALGVAFAMYSFGKDTPATQLVVPFFKDVMPQLGVLYILLTYFVIVGTSNAVNLTDGLDGLAIMPTVFVAAGFALVAWATGNVNFANYLHIPYLSHAGELVIVCTAIVGAGLGFLWFNTYPAQVFMGDVGSLALGGALGTIAVLLRQEFLLVIMGGVFVVETLSVILQVGSFKLRGQRIFRMAPIHHHYELKGWPEPRVIVRFWIISLMLVLIGLATLKVR.

The next 10 helical transmembrane spans lie at 27-47 (IVSL…MIAF), 71-91 (TPTM…LLWV), 94-114 (NNPY…VGFV), 132-152 (WKYF…YSFG), 168-188 (VMPQ…VGTS), 199-219 (GLAI…AWAT), 236-256 (AGEL…FLWF), 263-283 (VFMG…IAVL), 288-308 (FLLV…ILQV), and 338-358 (VIVR…ATLK).

It belongs to the glycosyltransferase 4 family. MraY subfamily. The cofactor is Mg(2+).

The protein localises to the cell inner membrane. It catalyses the reaction UDP-N-acetyl-alpha-D-muramoyl-L-alanyl-gamma-D-glutamyl-meso-2,6-diaminopimeloyl-D-alanyl-D-alanine + di-trans,octa-cis-undecaprenyl phosphate = di-trans,octa-cis-undecaprenyl diphospho-N-acetyl-alpha-D-muramoyl-L-alanyl-D-glutamyl-meso-2,6-diaminopimeloyl-D-alanyl-D-alanine + UMP. The protein operates within cell wall biogenesis; peptidoglycan biosynthesis. Catalyzes the initial step of the lipid cycle reactions in the biosynthesis of the cell wall peptidoglycan: transfers peptidoglycan precursor phospho-MurNAc-pentapeptide from UDP-MurNAc-pentapeptide onto the lipid carrier undecaprenyl phosphate, yielding undecaprenyl-pyrophosphoryl-MurNAc-pentapeptide, known as lipid I. The protein is Phospho-N-acetylmuramoyl-pentapeptide-transferase of Photorhabdus laumondii subsp. laumondii (strain DSM 15139 / CIP 105565 / TT01) (Photorhabdus luminescens subsp. laumondii).